The sequence spans 181 residues: Large ribosomal subunit protein uL16 (181 aa).

This sequence belongs to the universal ribosomal protein uL16 family. In terms of assembly, part of the 50S ribosomal subunit.

This is Large ribosomal subunit protein uL16 from Pyrococcus furiosus (strain ATCC 43587 / DSM 3638 / JCM 8422 / Vc1).